Reading from the N-terminus, the 310-residue chain is Acetyl-coenzyme A carboxylase carboxyl transferase subunit beta (310 aa).

Positions 27 to 296 (LWRKCPNCEA…QDRDAEPDDT (270 aa)) constitute a CoA carboxyltransferase N-terminal domain. The Zn(2+) site is built by Cys31, Cys34, Cys50, and Cys53. A C4-type zinc finger spans residues 31–53 (CPNCEAVLYLPELERHQSVCPKC). The disordered stretch occupies residues 282–310 (THQPHQDRDAEPDDTASQSTLDEFSQADH).

It belongs to the AccD/PCCB family. As to quaternary structure, acetyl-CoA carboxylase is a heterohexamer composed of biotin carboxyl carrier protein (AccB), biotin carboxylase (AccC) and two subunits each of ACCase subunit alpha (AccA) and ACCase subunit beta (AccD). The cofactor is Zn(2+).

The protein resides in the cytoplasm. The catalysed reaction is N(6)-carboxybiotinyl-L-lysyl-[protein] + acetyl-CoA = N(6)-biotinyl-L-lysyl-[protein] + malonyl-CoA. The protein operates within lipid metabolism; malonyl-CoA biosynthesis; malonyl-CoA from acetyl-CoA: step 1/1. In terms of biological role, component of the acetyl coenzyme A carboxylase (ACC) complex. Biotin carboxylase (BC) catalyzes the carboxylation of biotin on its carrier protein (BCCP) and then the CO(2) group is transferred by the transcarboxylase to acetyl-CoA to form malonyl-CoA. The chain is Acetyl-coenzyme A carboxylase carboxyl transferase subunit beta from Chromohalobacter salexigens (strain ATCC BAA-138 / DSM 3043 / CIP 106854 / NCIMB 13768 / 1H11).